We begin with the raw amino-acid sequence, 727 residues long: Putative inactive disease susceptibility protein LOV1 (727 aa).

The NB-ARC domain occupies 44–336 (EQSVEALAGH…AAEGIITSSD (293 aa)). LRR repeat units follow at residues 459-484 (LPLL…IGDL), 485-507 (IHLR…LRNL), 509-530 (LLLY…LKEM), 575-600 (MTKL…LGQL), and 601-626 (RSLE…IVLN).

Belongs to the disease resistance NB-LRR family. RPP8/HRT subfamily.

The sequence is that of Putative inactive disease susceptibility protein LOV1 (LOV1) from Arabidopsis thaliana (Mouse-ear cress).